A 314-amino-acid polypeptide reads, in one-letter code: Tetraacyldisaccharide 4'-kinase (314 aa).

Position 54 to 61 (54 to 61) interacts with ATP; it reads YIGGTGKT.

It belongs to the LpxK family.

The catalysed reaction is a lipid A disaccharide + ATP = a lipid IVA + ADP + H(+). It participates in glycolipid biosynthesis; lipid IV(A) biosynthesis; lipid IV(A) from (3R)-3-hydroxytetradecanoyl-[acyl-carrier-protein] and UDP-N-acetyl-alpha-D-glucosamine: step 6/6. Transfers the gamma-phosphate of ATP to the 4'-position of a tetraacyldisaccharide 1-phosphate intermediate (termed DS-1-P) to form tetraacyldisaccharide 1,4'-bis-phosphate (lipid IVA). In Pelagibacter ubique (strain HTCC1062), this protein is Tetraacyldisaccharide 4'-kinase.